Reading from the N-terminus, the 159-residue chain is Ribosome-binding factor A (159 aa).

2 stretches are compositionally biased toward basic and acidic residues: residues 118–128 (AADDEVAKARE) and 137–146 (DPYKEPRVAS). The segment at 118 to 159 (AADDEVAKARENAQPAGDADPYKEPRVASDEDEASPDVREAD) is disordered.

The protein belongs to the RbfA family. As to quaternary structure, monomer. Binds 30S ribosomal subunits, but not 50S ribosomal subunits or 70S ribosomes.

The protein localises to the cytoplasm. In terms of biological role, one of several proteins that assist in the late maturation steps of the functional core of the 30S ribosomal subunit. Associates with free 30S ribosomal subunits (but not with 30S subunits that are part of 70S ribosomes or polysomes). Required for efficient processing of 16S rRNA. May interact with the 5'-terminal helix region of 16S rRNA. The protein is Ribosome-binding factor A of Rhodococcus erythropolis (strain PR4 / NBRC 100887).